The following is a 429-amino-acid chain: 5-methylthioadenosine/S-adenosylhomocysteine deaminase (429 aa).

Zn(2+) is bound by residues H65 and H67. Substrate is bound by residues E94 and H182. H209 contacts Zn(2+). 2 residues coordinate substrate: E212 and D297. D297 provides a ligand contact to Zn(2+).

Belongs to the metallo-dependent hydrolases superfamily. MTA/SAH deaminase family. It depends on Zn(2+) as a cofactor.

The catalysed reaction is S-adenosyl-L-homocysteine + H2O + H(+) = S-inosyl-L-homocysteine + NH4(+). The enzyme catalyses S-methyl-5'-thioadenosine + H2O + H(+) = S-methyl-5'-thioinosine + NH4(+). Functionally, catalyzes the deamination of 5-methylthioadenosine and S-adenosyl-L-homocysteine into 5-methylthioinosine and S-inosyl-L-homocysteine, respectively. Is also able to deaminate adenosine. The polypeptide is 5-methylthioadenosine/S-adenosylhomocysteine deaminase (Clostridium tetani (strain Massachusetts / E88)).